Reading from the N-terminus, the 288-residue chain is Alpha/beta hydrolase domain-containing protein 17B (288 aa).

Catalysis depends on charge relay system residues Ser170, Asp235, and His264.

This sequence belongs to the AB hydrolase superfamily. ABHD17 family. Post-translationally, palmitoylated on cysteine residues located in a cysteine cluster at the N-terminus which promotes membrane localization.

The protein localises to the cell membrane. The protein resides in the recycling endosome membrane. It is found in the cell projection. It localises to the dendritic spine. Its subcellular location is the postsynaptic density membrane. The catalysed reaction is S-hexadecanoyl-L-cysteinyl-[protein] + H2O = L-cysteinyl-[protein] + hexadecanoate + H(+). In terms of biological role, hydrolyzes fatty acids from S-acylated cysteine residues in proteins. Has depalmitoylating activity towards NRAS. This Gallus gallus (Chicken) protein is Alpha/beta hydrolase domain-containing protein 17B.